The primary structure comprises 431 residues: Divalent metal cation transporter MntH (431 aa).

11 helical membrane passes run 33–53 (LLKF…PGNF), 61–81 (SSFN…AIFL), 110–130 (WIFW…EFIG), 141–161 (IPMI…VYME), 170–190 (TIIA…LFLA), 211–231 (AVLI…IYLH), 258–278 (ILIA…VSAA), 307–327 (GAFG…GTMA), 347–367 (IITM…MRVL), 368–388 (VLSQ…MLLI), and 406–426 (IVGF…LYLT).

This sequence belongs to the NRAMP family.

The protein localises to the cell membrane. Its function is as follows. H(+)-stimulated, divalent metal cation uptake system. This chain is Divalent metal cation transporter MntH, found in Clostridium acetobutylicum (strain ATCC 824 / DSM 792 / JCM 1419 / IAM 19013 / LMG 5710 / NBRC 13948 / NRRL B-527 / VKM B-1787 / 2291 / W).